The sequence spans 608 residues: Afamin (608 aa).

The first 21 residues, 1–21 (MRHLKLTGFIFFLLSLTESLA), serve as a signal peptide directing secretion. 3 consecutive Albumin domains span residues 22–210 (LPTK…APIT), 211–403 (QYLK…KFNE), and 404–599 (TTER…KTGD). N-linked (GlcNAc...) asparagine glycosylation occurs at asparagine 33. Intrachain disulfides connect cysteine 77–cysteine 86, cysteine 99–cysteine 114, cysteine 113–cysteine 124, cysteine 148–cysteine 193, cysteine 224–cysteine 270, cysteine 269–cysteine 277, cysteine 289–cysteine 303, cysteine 302–cysteine 313, cysteine 340–cysteine 385, and cysteine 384–cysteine 393. A glycan (N-linked (GlcNAc...) asparagine) is linked at asparagine 109. Asparagine 153 carries an N-linked (GlcNAc...) asparagine glycan. The tract at residues 215 to 319 (ALSSYQRNVC…RADCIINANK (105 aa)) is binding pocket for hydrophobic ligands. Asparagine 402 is a glycosylation site (N-linked (GlcNAc...) asparagine). Disulfide bonds link cysteine 416-cysteine 462, cysteine 461-cysteine 470, cysteine 483-cysteine 499, cysteine 498-cysteine 509, and cysteine 580-cysteine 589. N-linked (GlcNAc...) asparagine glycosylation is present at asparagine 488. The interval 585–608 (KPEACFSPESSKTGDVSQDAEKQR) is disordered.

It belongs to the ALB/AFP/VDB family. In terms of assembly, forms a 1:1 complex with Wnt family members; interacts with WNT1, WNT2B, WNT3, WNT3A, WNT5A, WNT7A, WNT7B, WNT8, WNT9A, WNT9B, WNT10A and WNT10B. Post-translationally, N-glycosylated; more than 90% of the glycans are sialylated.

The protein localises to the secreted. Functions as a carrier for hydrophobic molecules in body fluids. Essential for the solubility and activity of lipidated Wnt family members, including WNT1, WNT2B, WNT3, WNT3A, WNT5A, WNT7A, WNT7B, WNT8, WNT9A, WNT9B, WNT10A and WNT10B. Binds vitamin E. May transport vitamin E in body fluids under conditions where the lipoprotein system is not sufficient. May be involved in the transport of vitamin E across the blood-brain barrier. This chain is Afamin (Afm), found in Rattus norvegicus (Rat).